The following is a 473-amino-acid chain: MLKIFNTLTKKKEKFIPINAGKIKIYVCGVTVYDLCHLGHARTFIVFDSVIRYLRHCGYQVSYVRNITDIDDKIIKRAYENNETTQQLTNRMIQEMHLDLDALNILRPNYEPKVTEHIDIIIKFICLLISKKHAYTAPNGDIMFSVETMHNYGVLSNKENPPKIHDNILKIPNIKKNPMDFVLWKKTTYNNKLGEPCWSSPWGLGRPGWHIECSAMNYSIFGNQIDIHGGGSDLIFPHHDNEIAQSVCAHETSYANIWMHSGLLLLNYEKMSKSLNNFFTIRDILKHYDPETIRFFLMSAHYRSQLKYNDNNLKNAQTSLKRLYIALRDTNPTIQPNGGDNEGEYFISKFISKMNDDFNTPEAYSVLFDIAHRLNNLKIKGHSLLAQGMAATLKYLANIIGLLHQNPEIFLKKITLKHNKNRHFEKIQKLIQCREVARKNNQWELADSIRKKLTVMGITLEDGPTGITKWHFK.

C28 is a binding site for Zn(2+). Positions 30–40 (VTVYDLCHLGH) match the 'HIGH' region motif. Zn(2+) is bound by residues C213, H238, and E242. The short motif at 270-274 (KMSKS) is the 'KMSKS' region element. Residue K273 coordinates ATP.

Belongs to the class-I aminoacyl-tRNA synthetase family. In terms of assembly, monomer. It depends on Zn(2+) as a cofactor.

The protein resides in the cytoplasm. The enzyme catalyses tRNA(Cys) + L-cysteine + ATP = L-cysteinyl-tRNA(Cys) + AMP + diphosphate. This is Cysteine--tRNA ligase from Blochmanniella pennsylvanica (strain BPEN).